The primary structure comprises 121 residues: Large ribosomal subunit protein bL12 (121 aa).

Belongs to the bacterial ribosomal protein bL12 family. As to quaternary structure, homodimer. Part of the ribosomal stalk of the 50S ribosomal subunit. Forms a multimeric L10(L12)X complex, where L10 forms an elongated spine to which 2 to 4 L12 dimers bind in a sequential fashion. Binds GTP-bound translation factors.

Its function is as follows. Forms part of the ribosomal stalk which helps the ribosome interact with GTP-bound translation factors. Is thus essential for accurate translation. This Shewanella halifaxensis (strain HAW-EB4) protein is Large ribosomal subunit protein bL12.